A 529-amino-acid chain; its full sequence is Probable anion transporter 1, chloroplastic (529 aa).

The N-terminal 55 residues, M1 to R55, are a transit peptide targeting the chloroplast. Disordered regions lie at residues V13–G39 and T52–G78. The segment covering P28 to G39 has biased composition (gly residues). A compositionally biased stretch (basic and acidic residues) spans R67–G76. The next 11 membrane-spanning stretches (helical) occupy residues W120–M140, V158–I178, T187–A207, L209–M229, L251–I271, F274–W294, V340–W360, L378–A398, I418–M438, A469–A489, and V503–T523.

It belongs to the major facilitator superfamily. Sodium/anion cotransporter (TC 2.A.1.14) family.

The protein localises to the plastid. It is found in the chloroplast membrane. Functionally, probable anion transporter. The sequence is that of Probable anion transporter 1, chloroplastic (PHT4;1) from Oryza sativa subsp. japonica (Rice).